The primary structure comprises 337 residues: ATP-dependent (S)-NAD(P)H-hydrate dehydratase (337 aa).

Ser-6 carries the post-translational modification Phosphoserine. The 325-residue stretch at 11–335 (IKLAQKRCIP…DRVGEVFAKL (325 aa)) folds into the YjeF C-terminal domain. (6S)-NADPHX is bound by residues Gly-121 and 182–188 (NVVEFKR). ATP is bound by residues 218-222 (KGQSD) and 240-249 (GSNKRVGGQG). The disordered stretch occupies residues 224-246 (IFSPDSEKDMLTNSEEGSNKRVG). Asp-250 contributes to the (6S)-NADPHX binding site.

This sequence belongs to the NnrD/CARKD family. Mg(2+) is required as a cofactor.

It is found in the cytoplasm. It catalyses the reaction (6S)-NADHX + ATP = ADP + phosphate + NADH + H(+). It carries out the reaction (6S)-NADPHX + ATP = ADP + phosphate + NADPH + H(+). Its function is as follows. Catalyzes the dehydration of the S-form of NAD(P)HX at the expense of ATP, which is converted to ADP. Together with NAD(P)HX epimerase, which catalyzes the epimerization of the S- and R-forms, the enzyme allows the repair of both epimers of NAD(P)HX, a damaged form of NAD(P)H that is a result of enzymatic or heat-dependent hydration. This is ATP-dependent (S)-NAD(P)H-hydrate dehydratase from Saccharomyces cerevisiae (strain ATCC 204508 / S288c) (Baker's yeast).